Here is a 787-residue protein sequence, read N- to C-terminus: Formate acetyltransferase (787 aa).

In terms of domain architecture, PFL spans 8-629 (NIFEQAWDGF…GNSPVHKGVF (622 aa)). Cys-416 acts as the S-acetylcysteine intermediate in catalysis. Cys-417 (cysteine radical intermediate) is an active-site residue. Residues 645-774 (SPGANPSNKA…LTERVFHEVL (130 aa)) form the Glycine radical domain. Gly-749 is modified (glycine radical).

It belongs to the glycyl radical enzyme (GRE) family. PFL subfamily. In terms of assembly, homodimer.

The protein resides in the cytoplasm. The catalysed reaction is formate + acetyl-CoA = pyruvate + CoA. The protein operates within fermentation; pyruvate fermentation; formate from pyruvate: step 1/1. The polypeptide is Formate acetyltransferase (pfl) (Lactococcus lactis subsp. lactis (strain IL1403) (Streptococcus lactis)).